A 623-amino-acid polypeptide reads, in one-letter code: Keratin, type I cytoskeletal 9 (623 aa).

The segment covering 1-13 has biased composition (low complexity); sequence MSCRQFSSSYLSR. Residues 1 to 25 are disordered; that stretch reads MSCRQFSSSYLSRSGGGGGGGLGSG. The segment at 1 to 152 is head; it reads MSCRQFSSSY…GGDGGILTAN (152 aa). A phosphoserine mark is found at S14 and S57. The span at 14-25 shows a compositional bias: gly residues; that stretch reads SGGGGGGGLGSG. The interval 153 to 188 is coil 1A; sequence EKSTMQELNSRLASYLDKVQALEEANNDLENKIQDW. Positions 153-465 constitute an IF rod domain; sequence EKSTMQELNS…NLLEGGQEDF (313 aa). The tract at residues 189–207 is linker 1; it reads YDKKGPAAIQKNYSPYYNT. Residues 208-299 form a coil 1B region; sequence IDDLKDQIVD…KNHKEEMSQL (92 aa). The tract at residues 300–322 is linker 12; it reads TGQNSGDVNVEINVAPGKDLTKT. The segment at 323 to 461 is coil 2; the sequence is LNDMRQEYEQ…ETYHNLLEGG (139 aa). 2 disordered regions span residues 462–496 and 534–623; these read QEDF…SGGS and YGGG…SSHS. Residues 462-623 form a tail region; it reads QEDFESSGAG…GGGSGKSSHS (162 aa). Residues 471-496 are compositionally biased toward gly residues; the sequence is GKIGLGGRGGSGGSYGRGSRGGSGGS.

This sequence belongs to the intermediate filament family. In terms of assembly, heterotetramer of two type I and two type II keratins. Expressed in the terminally differentiated epidermis of palms and soles.

Functionally, may serve an important special function either in the mature palmar and plantar skin tissue or in the morphogenetic program of the formation of these tissues. Plays a role in keratin filament assembly. The polypeptide is Keratin, type I cytoskeletal 9 (KRT9) (Homo sapiens (Human)).